Reading from the N-terminus, the 87-residue chain is MARITVEDCLTNMDNRFQLVLVAAKRARQLSMGHQPRVAEENDKPTVIALREIADGHVGREVLDEVVAEEHAAVSSRISEDEVRAEL.

Belongs to the RNA polymerase subunit omega family. In terms of assembly, the RNAP catalytic core consists of 2 alpha, 1 beta, 1 beta' and 1 omega subunit. When a sigma factor is associated with the core the holoenzyme is formed, which can initiate transcription.

It carries out the reaction RNA(n) + a ribonucleoside 5'-triphosphate = RNA(n+1) + diphosphate. Functionally, promotes RNA polymerase assembly. Latches the N- and C-terminal regions of the beta' subunit thereby facilitating its interaction with the beta and alpha subunits. This Thioalkalivibrio sulfidiphilus (strain HL-EbGR7) protein is DNA-directed RNA polymerase subunit omega.